Here is a 38-residue protein sequence, read N- to C-terminus: Beta-defensin 1 (38 aa).

Cystine bridges form between Cys-5–Cys-34, Cys-12–Cys-27, and Cys-17–Cys-35.

The protein belongs to the beta-defensin family. As to quaternary structure, monomer. Homodimer. As to expression, neutrophilic granules.

It is found in the secreted. The protein resides in the membrane. In terms of biological role, has bactericidal activity. Active against E.coli ML35 but not against S.aureus 502A. May act as a ligand for C-C chemokine receptor CCR6. Positively regulates the sperm motility and bactericidal activity in a CCR6-dependent manner. Binds to CCR6 and triggers Ca2+ mobilization in the sperm which is important for its motility. The chain is Beta-defensin 1 (DEFB1) from Bos taurus (Bovine).